Reading from the N-terminus, the 252-residue chain is uncharacterized protein (252 aa).

The Clp R domain maps to 96–238; sequence FRRFTPRARN…ITTLASLTGA (143 aa). Repeat stretches follow at residues 99–164 and 172–238; these read FTPR…PAVT and FSGP…LTGA.

Belongs to the ClpA/ClpB family. ClpC subfamily.

This is an uncharacterized protein from Mycobacterium bovis (strain ATCC BAA-935 / AF2122/97).